The following is a 488-amino-acid chain: GTPase Der (488 aa).

EngA-type G domains are found at residues 3–166 and 199–372; these read PVVA…AEAM and IKLA…DSAT. GTP is bound by residues 9–16, 56–60, 118–121, 205–212, 252–256, and 317–320; these read GRPNVGKS, DTGGI, NKVD, GKPNVGKS, DTAGV, and NKWD. Residues 373–457 form the KH-like domain; the sequence is RRVSTSMLTR…PIQLRFQEGD (85 aa). The segment at 460-488 is disordered; the sequence is FENKTEKLTMSQERRRKRAQSHIKDRKTK. The span at 473–488 shows a compositional bias: basic residues; it reads RRRKRAQSHIKDRKTK.

The protein belongs to the TRAFAC class TrmE-Era-EngA-EngB-Septin-like GTPase superfamily. EngA (Der) GTPase family. As to quaternary structure, associates with the 50S ribosomal subunit.

Functionally, GTPase that plays an essential role in the late steps of ribosome biogenesis. The chain is GTPase Der from Shewanella baltica (strain OS155 / ATCC BAA-1091).